A 170-amino-acid polypeptide reads, in one-letter code: Phosphopantetheine adenylyltransferase (170 aa).

Residue Ser14 participates in substrate binding. Residues 14-15 (SF) and His22 each bind ATP. Substrate is bound by residues Lys46, Leu79, and Arg93. Residues 94 to 96 (GIR), Glu104, and 129 to 135 (IAEVSST) each bind ATP.

It belongs to the bacterial CoaD family. In terms of assembly, homohexamer. The cofactor is Mg(2+).

It is found in the cytoplasm. The catalysed reaction is (R)-4'-phosphopantetheine + ATP + H(+) = 3'-dephospho-CoA + diphosphate. The protein operates within cofactor biosynthesis; coenzyme A biosynthesis; CoA from (R)-pantothenate: step 4/5. Functionally, reversibly transfers an adenylyl group from ATP to 4'-phosphopantetheine, yielding dephospho-CoA (dPCoA) and pyrophosphate. This is Phosphopantetheine adenylyltransferase from Neisseria meningitidis serogroup C (strain 053442).